Here is a 289-residue protein sequence, read N- to C-terminus: DegV domain-containing protein YteA (289 aa).

The DegV domain maps to 3-284 (FQIMTDSTAD…DGTIAIFSIS (282 aa)). Residues Thr-62 and Ser-94 each contribute to the hexadecanoate site.

Its function is as follows. May bind long-chain fatty acids, such as palmitate, and may play a role in lipid transport or fatty acid metabolism. This is DegV domain-containing protein YteA (yteA) from Lactococcus lactis subsp. lactis (strain IL1403) (Streptococcus lactis).